A 1436-amino-acid polypeptide reads, in one-letter code: Antigen WC1.1 (1436 aa).

A signal peptide spans Met1–Ala25. SRCR domains lie at Leu28–Ser131, Val134–Ser234, and Val239–Ser340. Cystine bridges form between Cys66–Cys130 and Cys97–Cys107. Asn162 is a glycosylation site (N-linked (GlcNAc...) asparagine). Cystine bridges form between Cys172–Cys233 and Cys203–Cys213. N-linked (GlcNAc...) asparagine glycans are attached at residues Asn244 and Asn256. Disulfide bonds link Cys265–Cys329, Cys278–Cys339, and Cys309–Cys319. N-linked (GlcNAc...) asparagine glycans are attached at residues Asn351, Asn424, and Asn444. SRCR domains lie at Leu376 to Ser476, Leu481 to Ala581, Ile586 to Ser686, Val689 to Ser789, and Val794 to Ser895. Intrachain disulfides connect Cys401–Cys465, Cys414–Cys475, and Cys445–Cys455. Asn499 and Asn531 each carry an N-linked (GlcNAc...) asparagine glycan. 6 cysteine pairs are disulfide-bonded: Cys506-Cys570, Cys519-Cys580, Cys550-Cys560, Cys611-Cys675, Cys624-Cys685, and Cys655-Cys665. Asn717 carries an N-linked (GlcNAc...) asparagine glycan. 2 disulfides stabilise this stretch: Cys727–Cys788 and Cys758–Cys768. N-linked (GlcNAc...) asparagine glycosylation is present at Asn799. Cystine bridges form between Cys820-Cys884, Cys833-Cys894, and Cys864-Cys874. Asn897, Asn979, and Asn999 each carry an N-linked (GlcNAc...) asparagine glycan. SRCR domains are found at residues Leu931–Ser1031, Leu1036–Glu1136, and Leu1155–Ser1255. 3 disulfides stabilise this stretch: Cys956–Cys1020, Cys969–Cys1030, and Cys1000–Cys1010. Residues Asn1054 and Asn1086 are each glycosylated (N-linked (GlcNAc...) asparagine). Intrachain disulfides connect Cys1061/Cys1125, Cys1074/Cys1135, and Cys1105/Cys1115. 2 N-linked (GlcNAc...) asparagine glycosylation sites follow: Asn1173 and Asn1214. 3 disulfide bridges follow: Cys1180–Cys1244, Cys1193–Cys1254, and Cys1224–Cys1234. The interval Glu1337–Leu1410 is disordered. Over residues Val1348–Glu1358 the composition is skewed to acidic residues. Polar residues predominate over residues Arg1384–Asn1393. An N-linked (GlcNAc...) asparagine glycan is attached at Asn1393.

Expressed on subsets of CD4-CD8- gamma delta T lymphocytes.

Its subcellular location is the secreted. This is Antigen WC1.1 from Bos taurus (Bovine).